A 337-amino-acid polypeptide reads, in one-letter code: Holliday junction branch migration complex subunit RuvB (337 aa).

Residues 1-182 (MSEEKSVLRD…FGAVFRLSYY (182 aa)) are large ATPase domain (RuvB-L). Residues Leu21, Arg22, Gly63, Lys66, Thr67, Thr68, 129-131 (EDY), Arg172, Tyr182, and Arg219 each bind ATP. Residue Thr67 participates in Mg(2+) binding. Residues 183 to 253 (KLEEIKQIVR…ITQLALTKLG (71 aa)) are small ATPAse domain (RuvB-S). The head domain (RuvB-H) stretch occupies residues 256 to 337 (HKGLDASDYL…VKYYKGLLDN (82 aa)). The DNA site is built by Arg311 and Arg316.

This sequence belongs to the RuvB family. In terms of assembly, homohexamer. Forms an RuvA(8)-RuvB(12)-Holliday junction (HJ) complex. HJ DNA is sandwiched between 2 RuvA tetramers; dsDNA enters through RuvA and exits via RuvB. An RuvB hexamer assembles on each DNA strand where it exits the tetramer. Each RuvB hexamer is contacted by two RuvA subunits (via domain III) on 2 adjacent RuvB subunits; this complex drives branch migration. In the full resolvosome a probable DNA-RuvA(4)-RuvB(12)-RuvC(2) complex forms which resolves the HJ.

Its subcellular location is the cytoplasm. It catalyses the reaction ATP + H2O = ADP + phosphate + H(+). The RuvA-RuvB-RuvC complex processes Holliday junction (HJ) DNA during genetic recombination and DNA repair, while the RuvA-RuvB complex plays an important role in the rescue of blocked DNA replication forks via replication fork reversal (RFR). RuvA specifically binds to HJ cruciform DNA, conferring on it an open structure. The RuvB hexamer acts as an ATP-dependent pump, pulling dsDNA into and through the RuvAB complex. RuvB forms 2 homohexamers on either side of HJ DNA bound by 1 or 2 RuvA tetramers; 4 subunits per hexamer contact DNA at a time. Coordinated motions by a converter formed by DNA-disengaged RuvB subunits stimulates ATP hydrolysis and nucleotide exchange. Immobilization of the converter enables RuvB to convert the ATP-contained energy into a lever motion, pulling 2 nucleotides of DNA out of the RuvA tetramer per ATP hydrolyzed, thus driving DNA branch migration. The RuvB motors rotate together with the DNA substrate, which together with the progressing nucleotide cycle form the mechanistic basis for DNA recombination by continuous HJ branch migration. Branch migration allows RuvC to scan DNA until it finds its consensus sequence, where it cleaves and resolves cruciform DNA. This is Holliday junction branch migration complex subunit RuvB from Acholeplasma laidlawii (strain PG-8A).